We begin with the raw amino-acid sequence, 65 residues long: Large ribosomal subunit protein bL35 (65 aa).

It belongs to the bacterial ribosomal protein bL35 family.

The protein is Large ribosomal subunit protein bL35 of Synechococcus sp. (strain CC9605).